The following is a 34-amino-acid chain: Small, acid-soluble spore protein M (34 aa).

The segment covering 1-10 (MKTRPKKAGQ) has biased composition (basic residues). A disordered region spans residues 1–34 (MKTRPKKAGQQKKTESKAIDSLDKKLGGPNRPST). A compositionally biased stretch (basic and acidic residues) spans 12 to 26 (KKTESKAIDSLDKKL).

It localises to the spore core. The chain is Small, acid-soluble spore protein M (sspM) from Bacillus subtilis (strain 168).